Here is a 1360-residue protein sequence, read N- to C-terminus: MKAAEIKRDLTNIQKSMSEINDLAKERITGGPGSISTTSASAITAPSTMSQTTTSRLAPKLTSAHPSIDDLRGLSRQDKITQLQKKIRASFENLVDHDDSNVIVTLPDDDDCPHNHFGSGLNLTHPTAAQLSASGLSGSSKTIDTIKFQEKSMKTESKTKVVTDGFSSEQATSNSAEMKRLQAGDIDYQESKGASAMRNRLEVDGVKTEENAAVIKEALSLRTGDITQQASNNVAASSITVQSENFSADKKAISQSQQSQTMTSNGIISQEKHVSSASQANYSMSHKGVSSTGSSMITSSSQMSAMNGQMLKLADLKLDDLKSLTAGSGQQEIEQTINKYSNMLTSIVSSLQEDERGGSAITVHDVGGKKSQYLEKINEVIRRAWAVPTHGHELGYSLCNSLRQSGGLDLLMKNCVKPDLQFSSAQLLEQCLTTENRKHVVDNGLDKVVNVACVCTKNSNMEHSRVGTGILEHLFKHSEGTCSDVIRLGGLDAVLFECRTSDLETLRHCASALANLSLYGGAENQEEMILRKVPMWLFPLAFHNDDNIKYYACLAIAVLVANKEIEAEVLKSGCLDLVEPFVTSHDPSAFARSNLAHAHGQSKHWLKRLVPVLSSNREEARNLAAFHFCMEAGIKREQGNTDIFREINAIEALKNVASCPNAIASKFAAQALRLIGETVPHKLSQQVPLWSVEDVQEWVKQIGFNDYIDKFNESQVDGDLLLKLNQDNLRADIGIGNGILLKRFERELQNLKRMADYSSKDTAKMHQFLSEIGTDYCTYTYAMLNAGIDKCALPHVNEDMLMTECGIHNSIHRLRILNAVKNLENSLPSSSEENMAKTLDVFVSYRRSNGSQLASLLKVHLQLRGFSVFIDVERLEAGKFDNGLLNSIRQAKNFVLVLTPDALHRCINDEDCKDWVHREIVAALNSNCNIIPIIDQQFDWPEVERLPEDMRSVAHFNGVNWIHDYQDACIDKLERFLRGEKNIDRIAAMVPGTPGSVSYQRMHSNDSDYQSGGAGAGSGAGTGGGGGGGVTGSVVDGLMVAANGSGQANHQANRYRQSPSPARQRGSTSQLSGYSRAPSKRSQILTPYRTQQAALLHKTGAGSASMQNMMPLAYLPPRRSSAAGLGHGSGSGMGSGYRSHSVDGLLDQAGSTPEQRIAAAAAKVTAGSTALTNASSTSTLQPEEEVTDAALNDSVTRRDKHTLSPPGNVQQHRKSRSLDHILSKQTLAELLPPSSELADGTQSMQNLAIPMTPQPQRRDTSSSSKSPTPERPPQPAMERVRERQSPEGVSATESEREDQPEECLRHGNQQRASASVHRGASLTSNKTSNSSLGSNFSAGGNNKTIFNRTMKKVRSLIKKP.

The segment at 27–52 (RITGGPGSISTTSASAITAPSTMSQT) is disordered. Over residues 34–48 (SISTTSASAITAPST) the composition is skewed to low complexity. SAM domains follow at residues 690–754 (WSVE…LKRM) and 760–828 (KDTA…NSLP). The TIR domain occupies 837–981 (KTLDVFVSYR…KLERFLRGEK (145 aa)). NAD(+) is bound by residues 846–847 (RR) and Glu876. Glu919 is a catalytic residue. Residues 997-1010 (VSYQRMHSNDSDYQ) show a composition bias toward polar residues. 5 disordered regions span residues 997–1026 (VSYQ…GGGG), 1046–1085 (GQAN…SQIL), 1121–1148 (SAAG…LLDQ), 1192–1217 (NDSV…KSRS), and 1249–1343 (IPMT…GNNK). Residues 1012–1026 (GGAGAGSGAGTGGGG) are compositionally biased toward gly residues. Positions 1046–1073 (GQANHQANRYRQSPSPARQRGSTSQLSG) are enriched in polar residues. A compositionally biased stretch (gly residues) spans 1125–1135 (LGHGSGSGMGS). The span at 1321 to 1335 (SLTSNKTSNSSLGSN) shows a compositional bias: low complexity.

Belongs to the SARM1 family. In terms of tissue distribution, widely expressed in larval brains and adult brains.

It localises to the cytoplasm. It is found in the cell projection. Its subcellular location is the axon. It catalyses the reaction NAD(+) + H2O = ADP-D-ribose + nicotinamide + H(+). It carries out the reaction NAD(+) = cyclic ADP-beta-D-ribose + nicotinamide + H(+). NAD(+) hydrolase, which plays a key role in axonal degeneration following injury by regulating NAD(+) metabolism. Acts as a negative regulator of MYD88- and TRIF-dependent toll-like receptor signaling pathway by promoting Wallerian degeneration, an injury-induced form of programmed subcellular death which involves degeneration of an axon distal to the injury site. Wallerian degeneration is triggered by NAD(+) depletion: in response to injury, it is activated and catalyzes cleavage of NAD(+) into ADP-D-ribose (ADPR), cyclic ADPR (cADPR) and nicotinamide; NAD(+) cleavage promoting axon destruction. Involved in the down-regulation of the tracheal immune response to Gram-negative bacteria. This is likely by mediating Tollo signaling in the tracheal epithelium. This is NAD(+) hydrolase sarm1 from Drosophila melanogaster (Fruit fly).